A 510-amino-acid polypeptide reads, in one-letter code: D-alanine--D-alanyl carrier protein ligase (510 aa).

157 to 158 (TS) provides a ligand contact to ATP. Asp-202 is a D-alanine binding site. 297-302 (NTYGPT) lines the ATP pocket. Val-306 lines the D-alanine pocket. The ATP site is built by Asp-389 and Lys-498. D-alanine is bound at residue Lys-498.

It belongs to the ATP-dependent AMP-binding enzyme family. DltA subfamily.

Its subcellular location is the cytoplasm. The catalysed reaction is holo-[D-alanyl-carrier protein] + D-alanine + ATP = D-alanyl-[D-alanyl-carrier protein] + AMP + diphosphate. The protein operates within cell wall biogenesis; lipoteichoic acid biosynthesis. Its function is as follows. Catalyzes the first step in the D-alanylation of lipoteichoic acid (LTA), the activation of D-alanine and its transfer onto the D-alanyl carrier protein (Dcp) DltC. In an ATP-dependent two-step reaction, forms a high energy D-alanyl-AMP intermediate, followed by transfer of the D-alanyl residue as a thiol ester to the phosphopantheinyl prosthetic group of the Dcp. D-alanylation of LTA plays an important role in modulating the properties of the cell wall in Gram-positive bacteria, influencing the net charge of the cell wall. This is D-alanine--D-alanyl carrier protein ligase from Listeria monocytogenes serotype 4b (strain F2365).